Here is a 384-residue protein sequence, read N- to C-terminus: Succinyl-diaminopimelate desuccinylase (384 aa).

His-75 serves as a coordination point for Zn(2+). Asp-77 is a catalytic residue. Zn(2+) is bound at residue Asp-108. The Proton acceptor role is filled by Glu-142. Zn(2+) is bound by residues Glu-143, Glu-171, and His-357.

Belongs to the peptidase M20A family. DapE subfamily. As to quaternary structure, homodimer. The cofactor is Zn(2+). It depends on Co(2+) as a cofactor.

It carries out the reaction N-succinyl-(2S,6S)-2,6-diaminopimelate + H2O = (2S,6S)-2,6-diaminopimelate + succinate. It functions in the pathway amino-acid biosynthesis; L-lysine biosynthesis via DAP pathway; LL-2,6-diaminopimelate from (S)-tetrahydrodipicolinate (succinylase route): step 3/3. In terms of biological role, catalyzes the hydrolysis of N-succinyl-L,L-diaminopimelic acid (SDAP), forming succinate and LL-2,6-diaminopimelate (DAP), an intermediate involved in the bacterial biosynthesis of lysine and meso-diaminopimelic acid, an essential component of bacterial cell walls. The chain is Succinyl-diaminopimelate desuccinylase from Shewanella oneidensis (strain ATCC 700550 / JCM 31522 / CIP 106686 / LMG 19005 / NCIMB 14063 / MR-1).